Consider the following 739-residue polypeptide: UPF0313 protein YgiQ (739 aa).

The Radical SAM core domain maps to 372–650 (AYEMIRFSVN…KALLRYHDPA (279 aa)). Cys386, Cys390, and Cys393 together coordinate [4Fe-4S] cluster. Positions 685 to 739 (REARRQNRNTRPALTKHTPMATQRQTPATAKKASSTQSRPVNAGAKKRPKAAVGR) are disordered. A compositionally biased stretch (polar residues) spans 704–724 (MATQRQTPATAKKASSTQSRP). The segment covering 729–739 (AKKRPKAAVGR) has biased composition (basic residues).

This sequence belongs to the UPF0313 family. [4Fe-4S] cluster serves as cofactor.

This is UPF0313 protein YgiQ from Shigella flexneri.